The sequence spans 63 residues: Disintegrin schistatin-like subunit B (63 aa).

In terms of domain architecture, Disintegrin spans 1–63 (NSVNPCCDPQ…TPDCPRNRYN (63 aa)). Cystine bridges form between Cys6–Cys29, Cys20–Cys26, Cys25–Cys50, and Cys38–Cys57. Residues 42–44 (RGD) carry the Cell attachment site motif.

The protein belongs to the disintegrin family. Dimeric disintegrin subfamily. As to quaternary structure, heterodimer with subunit A; disulfide-linked. In terms of tissue distribution, expressed by the venom gland.

The protein resides in the secreted. Functionally, may bind to both alpha-IIb/beta-3 (ITGA2B/ITGB3) and alpha-V/beta-3 (ITGAV/ITGB3) integrins, and may inhibit platelet aggregation. The protein is Disintegrin schistatin-like subunit B of Echis carinatus (Saw-scaled viper).